The chain runs to 375 residues: Beta-1,3-N-acetylglucosaminyltransferase lunatic fringe (375 aa).

Over 1–8 (MLKNWGKK) the chain is Cytoplasmic. The helical; Signal-anchor for type II membrane protein transmembrane segment at 9–29 (LLLSIVGATLTCLLVLVVDQQ) threads the bilayer. Topologically, residues 30 to 375 (SRHMLETQSD…TPWCPWKAAY (346 aa)) are lumenal. A disordered region spans residues 53–73 (DLDPANPGDGGDPANSAQDSG). R125 contacts substrate. An N-linked (GlcNAc...) asparagine glycan is attached at N163. Cystine bridges form between C164–C175 and C193–C256. D197 serves as a coordination point for substrate. D198 lines the Mn(2+) pocket. D286 is an active-site residue. Mn(2+) is bound at residue H310. Residues C360 and C369 are joined by a disulfide bond.

It belongs to the glycosyltransferase 31 family. Mn(2+) is required as a cofactor. The cofactor is Co(2+). In terms of processing, a soluble form may be derived from the membrane form by proteolytic processing. Detected in the neural tube, the eye and the otic vesicle, expression coincides with the region that produces the medial, intermediate and lateral neurons.

The protein localises to the golgi apparatus membrane. The catalysed reaction is 3-O-(alpha-L-fucosyl)-L-threonyl-[EGF-like domain protein] + UDP-N-acetyl-alpha-D-glucosamine = 3-O-(N-acetyl-beta-D-glucosaminyl-(1-&gt;3)-alpha-L-fucosyl)-L-threonyl-[EGF-like domain protein] + UDP + H(+). It carries out the reaction 3-O-(alpha-L-fucosyl)-L-seryl-[EGF-like domain protein] + UDP-N-acetyl-alpha-D-glucosamine = 3-O-(N-acetyl-beta-D-glucosaminyl-(1-&gt;3)-alpha-L-fucosyl)-L-seryl-[EGF-like domain protein] + UDP + H(+). Functionally, glycosyltransferase that initiates the elongation of O-linked fucose residues attached to EGF-like repeats in the extracellular domain of Notch molecules. Essential mediator of somite segmentation and patterning. May be involved in mesoderm development. In Xenopus laevis (African clawed frog), this protein is Beta-1,3-N-acetylglucosaminyltransferase lunatic fringe (lfng).